The primary structure comprises 349 residues: tRNA pseudouridine synthase D (349 aa).

Residue F27 coordinates substrate. D80 functions as the Nucleophile in the catalytic mechanism. Residue N129 coordinates substrate. The region spanning 155 to 303 is the TRUD domain; it reads GVPNYFGAQR…VEAARRAMLL (149 aa). F329 provides a ligand contact to substrate.

Belongs to the pseudouridine synthase TruD family.

The catalysed reaction is uridine(13) in tRNA = pseudouridine(13) in tRNA. Functionally, responsible for synthesis of pseudouridine from uracil-13 in transfer RNAs. The sequence is that of tRNA pseudouridine synthase D from Escherichia coli (strain SMS-3-5 / SECEC).